The following is a 513-amino-acid chain: Protein CYCLOPS (513 aa).

The disordered stretch occupies residues 327–435 (QIHGGTASGE…ERSRKMAEAK (109 aa)). Positions 334-347 (SGEPSQSESSAAAP) are enriched in low complexity. Residues 359-381 (PSNSSQTLCDSSWKQVGESTQNR) show a composition bias toward polar residues. Residues 384-396 (GVREQIMDNLKDD) show a composition bias toward basic and acidic residues. Short sequence motifs (nuclear localization signal) lie at residues 397–401 (RKRKR) and 421–424 (KKRR). Residues 447–513 (MQAVMKRCEN…ERLLSETGKI (67 aa)) are a coiled coil.

This sequence belongs to the CYCLOPS family.

The protein localises to the nucleus. In terms of biological role, involved symbiotic signaling. Required for root infection by symbiotic rhizobia, infection thread (IT) formation, and nodule development. Required for symbiosome formation (i.e. the release of the bacteria from the ITs) and subsequent symbiosome development. Involved in arbuscular mycorrhizal (AM) symbiosis. The protein is Protein CYCLOPS of Pisum sativum (Garden pea).